The primary structure comprises 416 residues: Na(+)/H(+) antiporter NhaA (416 aa).

9 helical membrane-spanning segments follow: residues 18–38 (VGGA…NSPW), 59–79 (LTLA…VAGL), 97–117 (ALPI…AAVI), 127–147 (GWAI…ALTG), 167–187 (LLAI…LWLL), 265–285 (GICV…ATVF), 297–317 (VMLG…WVAI), 333–353 (MFAL…VAEL), and 363–383 (LAKA…SALL). The disordered stretch occupies residues 396–416 (ALELQPDEGDASDPSEGGSLR).

It belongs to the NhaA Na(+)/H(+) (TC 2.A.33) antiporter family.

The protein resides in the cell membrane. The enzyme catalyses Na(+)(in) + 2 H(+)(out) = Na(+)(out) + 2 H(+)(in). Functionally, na(+)/H(+) antiporter that extrudes sodium in exchange for external protons. The chain is Na(+)/H(+) antiporter NhaA from Nocardia farcinica (strain IFM 10152).